The sequence spans 449 residues: Phosphoglucosamine mutase (449 aa).

Ser100 functions as the Phosphoserine intermediate in the catalytic mechanism. 4 residues coordinate Mg(2+): Ser100, Asp241, Asp243, and Asp245. Ser100 is subject to Phosphoserine.

It belongs to the phosphohexose mutase family. Requires Mg(2+) as cofactor. Activated by phosphorylation.

The catalysed reaction is alpha-D-glucosamine 1-phosphate = D-glucosamine 6-phosphate. Its function is as follows. Catalyzes the conversion of glucosamine-6-phosphate to glucosamine-1-phosphate. The chain is Phosphoglucosamine mutase from Caldicellulosiruptor bescii (strain ATCC BAA-1888 / DSM 6725 / KCTC 15123 / Z-1320) (Anaerocellum thermophilum).